A 559-amino-acid chain; its full sequence is NXPE family member 3 (559 aa).

An N-terminal signal peptide occupies residues 1–30 (MWTNFFKLRLFCCLLAVLMVVVLVINVTQV). N-linked (GlcNAc...) asparagine glycosylation is found at Asn-237, Asn-292, and Asn-346.

It belongs to the NXPE family.

Its subcellular location is the secreted. The sequence is that of NXPE family member 3 (NXPE3) from Homo sapiens (Human).